Consider the following 311-residue polypeptide: Porphobilinogen deaminase (311 aa).

Cys-241 is subject to S-(dipyrrolylmethanemethyl)cysteine.

The protein belongs to the HMBS family. Monomer. Dipyrromethane serves as cofactor.

The enzyme catalyses 4 porphobilinogen + H2O = hydroxymethylbilane + 4 NH4(+). The protein operates within porphyrin-containing compound metabolism; protoporphyrin-IX biosynthesis; coproporphyrinogen-III from 5-aminolevulinate: step 2/4. In terms of biological role, tetrapolymerization of the monopyrrole PBG into the hydroxymethylbilane pre-uroporphyrinogen in several discrete steps. In Campylobacter curvus (strain 525.92), this protein is Porphobilinogen deaminase.